Reading from the N-terminus, the 412-residue chain is 1-deoxy-D-xylulose 5-phosphate reductoisomerase (412 aa).

Residues Thr-10, Gly-11, Ser-12, Ile-13, Gly-36, Lys-37, Asn-38, and Asn-130 each coordinate NADPH. Residue Lys-131 participates in 1-deoxy-D-xylulose 5-phosphate binding. Glu-132 lines the NADPH pocket. Asp-156 contacts Mn(2+). Residues Ser-157, Glu-158, Ser-194, and His-217 each contribute to the 1-deoxy-D-xylulose 5-phosphate site. Position 158 (Glu-158) interacts with Mn(2+). Gly-223 provides a ligand contact to NADPH. Residues Ser-230, Asn-235, Lys-236, and Glu-239 each contribute to the 1-deoxy-D-xylulose 5-phosphate site. Position 239 (Glu-239) interacts with Mn(2+).

This sequence belongs to the DXR family. It depends on Mg(2+) as a cofactor. Requires Mn(2+) as cofactor.

It carries out the reaction 2-C-methyl-D-erythritol 4-phosphate + NADP(+) = 1-deoxy-D-xylulose 5-phosphate + NADPH + H(+). The protein operates within isoprenoid biosynthesis; isopentenyl diphosphate biosynthesis via DXP pathway; isopentenyl diphosphate from 1-deoxy-D-xylulose 5-phosphate: step 1/6. Its function is as follows. Catalyzes the NADPH-dependent rearrangement and reduction of 1-deoxy-D-xylulose-5-phosphate (DXP) to 2-C-methyl-D-erythritol 4-phosphate (MEP). The polypeptide is 1-deoxy-D-xylulose 5-phosphate reductoisomerase (Prochlorococcus marinus (strain NATL2A)).